A 448-amino-acid chain; its full sequence is Bifunctional protein GlmU (448 aa).

The pyrophosphorylase stretch occupies residues 1-232 (MTARSSLTIV…EDEVRGINTK (232 aa)). UDP-N-acetyl-alpha-D-glucosamine-binding positions include 11–14 (LAAG), K25, Q78, and 83–84 (GT). D108 lines the Mg(2+) pocket. UDP-N-acetyl-alpha-D-glucosamine is bound by residues G144, E158, N173, and N230. Position 230 (N230) interacts with Mg(2+). The segment at 233–253 (AQLAQAEAAMQARLRQAAMDA) is linker. The tract at residues 254–448 (GVTLIAPETV…FRNAKLRQTK (195 aa)) is N-acetyltransferase. R319 and K337 together coordinate UDP-N-acetyl-alpha-D-glucosamine. H349 serves as the catalytic Proton acceptor. Y352 and N363 together coordinate UDP-N-acetyl-alpha-D-glucosamine. Residues A366, 372–373 (NY), S409, and R426 contribute to the acetyl-CoA site. Residues 427–448 (SPQTTKEGAAARFRNAKLRQTK) form a disordered region.

It in the N-terminal section; belongs to the N-acetylglucosamine-1-phosphate uridyltransferase family. The protein in the C-terminal section; belongs to the transferase hexapeptide repeat family. In terms of assembly, homotrimer. It depends on Mg(2+) as a cofactor.

It localises to the cytoplasm. The catalysed reaction is alpha-D-glucosamine 1-phosphate + acetyl-CoA = N-acetyl-alpha-D-glucosamine 1-phosphate + CoA + H(+). It catalyses the reaction N-acetyl-alpha-D-glucosamine 1-phosphate + UTP + H(+) = UDP-N-acetyl-alpha-D-glucosamine + diphosphate. Its pathway is nucleotide-sugar biosynthesis; UDP-N-acetyl-alpha-D-glucosamine biosynthesis; N-acetyl-alpha-D-glucosamine 1-phosphate from alpha-D-glucosamine 6-phosphate (route II): step 2/2. The protein operates within nucleotide-sugar biosynthesis; UDP-N-acetyl-alpha-D-glucosamine biosynthesis; UDP-N-acetyl-alpha-D-glucosamine from N-acetyl-alpha-D-glucosamine 1-phosphate: step 1/1. It functions in the pathway bacterial outer membrane biogenesis; LPS lipid A biosynthesis. Catalyzes the last two sequential reactions in the de novo biosynthetic pathway for UDP-N-acetylglucosamine (UDP-GlcNAc). The C-terminal domain catalyzes the transfer of acetyl group from acetyl coenzyme A to glucosamine-1-phosphate (GlcN-1-P) to produce N-acetylglucosamine-1-phosphate (GlcNAc-1-P), which is converted into UDP-GlcNAc by the transfer of uridine 5-monophosphate (from uridine 5-triphosphate), a reaction catalyzed by the N-terminal domain. The protein is Bifunctional protein GlmU of Bradyrhizobium sp. (strain ORS 278).